The primary structure comprises 374 residues: Trichodiene synthase (374 aa).

Residues Asp-100, Glu-164, Asn-225, Ser-229, Glu-233, Asp-239, and Ile-241 each contribute to the Mg(2+) site. An aspartate-rich domain region spans residues 100 to 104 (DDSKD).

It belongs to the trichodiene synthase family. The cofactor is Mg(2+). Requires Mn(2+) as cofactor.

The enzyme catalyses (2E,6E)-farnesyl diphosphate = trichodiene + diphosphate. Its pathway is sesquiterpene biosynthesis; trichothecene biosynthesis. With respect to regulation, benzyl triethylammonium cation (BTAC) acts as a competitive inhibitor of trichodiene synthase reaction in the presence of pyrophosphate (PPi). In terms of biological role, trichodiene synthase; part of the core gene cluster that mediates the biosynthesis of trichothecenes, a very large family of chemically related bicyclic sesquiterpene compounds acting as mycotoxins, including T2-toxin. The biosynthesis of trichothecenes begins with the cyclization of farnesyl diphosphate to trichodiene and is catalyzed by the trichodiene synthase TRI5. Trichodiene undergoes a series of oxygenations catalyzed by the cytochrome P450 monooxygenase TRI4. TRI4 controls the addition of four oxygens at C-2, C-3, C-11, and the C-12, C-13-epoxide to form the intermediate isotrichotriol. Isotrichotriol then undergoes a non-enzymatic isomerization and cyclization to form isotrichodermol. During this process, the oxygen at the C-2 position becomes the pyran ring oxygen and the hydroxyl group at C-11 is lost. More complex type A trichothecenes are built by modifying isotrichodermol through a series of paired hydroxylation and acetylation or acylation steps. Isotrichodermol is converted to isotrichodermin by the acetyltransferase TRI101. TRI101 encodes a C-3 transacetylase that acts as a self-protection or resistance factor during biosynthesis and that the presence of a free C-3 hydroxyl group is a key component of Fusarium trichothecene phytotoxicity. A second hydroxyl group is added to C-15 by the trichothecene C-15 hydroxylase TRI11, producing 15-decalonectrin, which is then acetylated by TRI3, producing calonectrin. A third hydroxyl group is added at C-4 by the cytochrome P450 monooxygenase TRI13, converting calonectrin to 3,15-diacetoxyspirpenol, which is subsequently acetylated by the acetyltransferase TRI7. A fourth hydroxyl group is added to C-8 by the cytochrome P450 monooxygenase TRI1, followed by the addition of an isovaleryl moiety by TRI16. Finally, the acetyl group is removed from the C-3 position by the trichothecene C-3 esterase TRI8 to produce T-2 toxin. In Fusarium sporotrichioides, this protein is Trichodiene synthase.